We begin with the raw amino-acid sequence, 161 residues long: UPF0178 protein Rsph17025_3122 (161 aa).

Belongs to the UPF0178 family.

In Cereibacter sphaeroides (strain ATCC 17025 / ATH 2.4.3) (Rhodobacter sphaeroides), this protein is UPF0178 protein Rsph17025_3122.